A 242-amino-acid polypeptide reads, in one-letter code: Glucosamine-6-phosphate deaminase (242 aa).

Residue D71 is the Proton acceptor; for enolization step of the active site. Residue N142 is the For ring-opening step of the active site. The active-site Proton acceptor; for ring-opening step is the H144. The For ring-opening step role is filled by E149.

It belongs to the glucosamine/galactosamine-6-phosphate isomerase family. NagB subfamily.

It catalyses the reaction alpha-D-glucosamine 6-phosphate + H2O = beta-D-fructose 6-phosphate + NH4(+). It participates in amino-sugar metabolism; N-acetylneuraminate degradation; D-fructose 6-phosphate from N-acetylneuraminate: step 5/5. Its function is as follows. Catalyzes the reversible isomerization-deamination of glucosamine 6-phosphate (GlcN6P) to form fructose 6-phosphate (Fru6P) and ammonium ion. The sequence is that of Glucosamine-6-phosphate deaminase from Malacoplasma penetrans (strain HF-2) (Mycoplasma penetrans).